Consider the following 170-residue polypeptide: Fibroblast growth factor 2 (170 aa).

The tract at residues 1–21 (VGGRGRGRGTAAAARREPGGA) is disordered. Omega-N-methylarginine; alternate occurs at positions 4, 6, and 8. Residues Arg-4, Arg-6, and Arg-8 each carry the symmetric dimethylarginine; alternate modification. Over residues 9–21 (GTAAAARREPGGA) the composition is skewed to low complexity. Residue Asn-51 participates in heparin binding. The residue at position 97 (Tyr-97) is a Phosphotyrosine; by TEC. Lys-110 participates in a covalent cross-link: Glycyl lysine isopeptide (Lys-Gly) (interchain with G-Cter in SUMO1). A heparin-binding region spans residues 143–159 (KRTGQYKLGSKTGPGQK).

Belongs to the heparin-binding growth factors family. In terms of assembly, monomer. Homodimer. Interacts with FGFR1, FGFR2, FGFR3 and FGFR4. Affinity between fibroblast growth factors (FGFs) and their receptors is increased by heparan sulfate glycosaminoglycans that function as coreceptors. Interacts with CSPG4, FGFBP1 and TEC. Found in a complex with FGFBP1, FGF1 and FGF2. Interacts with FGFBP3. Interacts with integrin ITGAV:ITGB3; the interaction is required for FGF2 signaling. Interacts with SNORC (via the extracellular domain). Interacts with glypican GPC3. Post-translationally, the N-terminus of isoform 2 is blocked. In terms of processing, phosphorylation at Tyr-97 regulates FGF2 unconventional secretion.

The protein localises to the secreted. Its subcellular location is the nucleus. In terms of biological role, acts as a ligand for FGFR1, FGFR2, FGFR3 and FGFR4. Also acts as an integrin ligand which is required for FGF2 signaling. Binds to integrin ITGAV:ITGB3. Plays an important role in the regulation of cell survival, cell division, cell differentiation and cell migration. Functions as a potent mitogen in vitro. Can induce angiogenesis. Mediates phosphorylation of ERK1/2 and thereby promotes retinal lens fiber differentiation. The chain is Fibroblast growth factor 2 (FGF2) from Cavia porcellus (Guinea pig).